We begin with the raw amino-acid sequence, 130 residues long: uncharacterized protein (130 aa).

This is an uncharacterized protein from Sulfolobus islandicus filamentous virus (isolate Iceland/Hveragerdi) (SIFV).